The primary structure comprises 342 residues: MQTLQTTSLRVSENQLFILDQQALPQEKRWLAADNVALLVDHIHALRVRGAPLIGLSASLLLALLAQRGLNRDALQQALETLRAARPTAVNLMNNLDRMKQALAREDYPQALEAEALRLVEEDKQLCDRIAEAGSALVKPGSRLLTHCNTGGLATAGVGTALGVIALAHRQGKVANVWVDETRPLLQGGRLTAWELGELGVPYQLITDSMAASLMAQGQVDAVWVGADRIAANGDVANKIGTYSLAVLAHYHQIPFYVAAPQTTLDRYCPNGAAIPIEQRAAAEVTGVAGSFGAVQWAPMGAAVYNPAFDVTPAGLVSGWVLDSGVVTPAQVAAGAFAPDNG.

Residues 49–51 (RGA), Arg-86, and Gln-187 contribute to the substrate site. The Proton donor role is filled by Asp-228. 238-239 (NK) is a binding site for substrate.

The protein belongs to the eIF-2B alpha/beta/delta subunits family. MtnA subfamily.

The catalysed reaction is 5-(methylsulfanyl)-alpha-D-ribose 1-phosphate = 5-(methylsulfanyl)-D-ribulose 1-phosphate. It participates in amino-acid biosynthesis; L-methionine biosynthesis via salvage pathway; L-methionine from S-methyl-5-thio-alpha-D-ribose 1-phosphate: step 1/6. Functionally, catalyzes the interconversion of methylthioribose-1-phosphate (MTR-1-P) into methylthioribulose-1-phosphate (MTRu-1-P). This is Methylthioribose-1-phosphate isomerase from Klebsiella pneumoniae (strain 342).